Reading from the N-terminus, the 160-residue chain is Transcription antitermination protein NusB (160 aa).

This sequence belongs to the NusB family.

In terms of biological role, involved in transcription antitermination. Required for transcription of ribosomal RNA (rRNA) genes. Binds specifically to the boxA antiterminator sequence of the ribosomal RNA (rrn) operons. The polypeptide is Transcription antitermination protein NusB (Rhizobium leguminosarum bv. trifolii (strain WSM2304)).